Here is an 858-residue protein sequence, read N- to C-terminus: MQEQYNPQDLEQKIQKHWDDNKTFVVTEDANKEKFYCLSMFPYPSGRLHMGHVRNYTIGDVVSRYQRLQGKNVMQPIGWDAFGLPAENAAVKNKTAPAPWTYENIEYMKNQLKLLGFGYDWNREFATCTPEYYRWEQEFFTKLYSKGLVYKKTSSVNWCPNDQTVLANEQVEDGCCWRCDTPVEQKKIPQWFIKITEYAQELLDDLDNLDGWPEMVKTMQRNWIGRSEGVELSFAVNGEESPLEVYTTRPDTLMGVTYVGIAAGHPLAEKASQNNPELAAFVEECRNTKVAEAELATMEKKGMDTGLRAIHPLNGREVPVFVANFVLMDYGTGAVMAVPAHDQRDFEFATKYGLDIIPVIKPEDGSDLDVSEAAYTEKGVLFDSGEFDGLAFQEAFDAIAAKLEAEGKGKKTVNFRLRDWGVSRQRYWGAPIPMVTTEDGEVHPVPADQLPVILPEDVVMDGVTSPIKADKEWAKTTFNGEPALRETDTFDTFMESSWYYARYCSPQADDILDPEKANYWLPVDQYIGGIEHACMHLLYSRFFHKLLRDAGYVTSDEPFKQLLCQGMVLADAFYYTNDKGGKEWVAPTDVTIERDAKGRIEKAVDDQGREVEHSGMIKMSKSKNNGIDPQEMVDKYGADTVRLFMMFASPADMTLEWQESGVEGANRFLKRVWKLVHEHTNKGTTEALDTSSLTGDQKALRRDVHKTIAKVSDDIGRRQTFNTAIAAIMELMNKLNKAPQESAQDRALLDEALKAVVAMLYPMTPHASFAMWEALGESDLDSATWPTFDENALVEDEKTIVVMINGKLRAKLVVAADATEEHVRELGLKDENAMKFLDGLTIRKVIYVPGKLLNIVAN.

The 'HIGH' region motif lies at 42-52; the sequence is PYPSGRLHMGH. The 'KMSKS' region signature appears at 618–622; sequence KMSKS. An ATP-binding site is contributed by lysine 621.

Belongs to the class-I aminoacyl-tRNA synthetase family.

The protein localises to the cytoplasm. The catalysed reaction is tRNA(Leu) + L-leucine + ATP = L-leucyl-tRNA(Leu) + AMP + diphosphate. The polypeptide is Leucine--tRNA ligase (Aliivibrio fischeri (strain MJ11) (Vibrio fischeri)).